Here is a 136-residue protein sequence, read N- to C-terminus: Large-conductance mechanosensitive channel (136 aa).

A run of 2 helical transmembrane segments spans residues 10 to 30 and 76 to 96; these read FAMRGNVVDLAVGVIIGAAFG and GAFIQNIFDFVIVAFAIFIAI.

The protein belongs to the MscL family. Homopentamer.

It is found in the cell inner membrane. Channel that opens in response to stretch forces in the membrane lipid bilayer. May participate in the regulation of osmotic pressure changes within the cell. The protein is Large-conductance mechanosensitive channel of Pectobacterium atrosepticum (strain SCRI 1043 / ATCC BAA-672) (Erwinia carotovora subsp. atroseptica).